We begin with the raw amino-acid sequence, 332 residues long: Formamidase (332 aa).

The CN hydrolase domain maps to 14–259 (FLTALIQYPV…WEIVTAEVYP (246 aa)). Residue glutamate 60 is the Proton acceptor of the active site. The active-site Proton donor is lysine 132. The Nucleophile role is filled by cysteine 165.

It belongs to the carbon-nitrogen hydrolase superfamily. Aliphatic amidase family.

The enzyme catalyses formamide + H2O = formate + NH4(+). Its function is as follows. Is an aliphatic amidase with a restricted substrate specificity, as it only hydrolyzes formamide. This Bacillus cereus (strain B4264) protein is Formamidase.